The sequence spans 447 residues: Thiol-specific monooxygenase (447 aa).

FAD contacts are provided by residues 13–17 (GAGPS), Glu38, 46–47 (VW), 91–92 (NT), and 137–138 (DV). Residue 90–91 (TN) coordinates NADP(+). An NADP(+)-binding site is contributed by 223-226 (SAND).

Belongs to the FMO family. As to quaternary structure, monomer. FAD is required as a cofactor.

Functionally, flavin-dependent oxidation of thiol-containing compounds. Probably required for the correct folding of disulfide-bonded proteins. This Schizosaccharomyces pombe (strain 972 / ATCC 24843) (Fission yeast) protein is Thiol-specific monooxygenase (fmo1).